The sequence spans 771 residues: Putative 8-amino-7-oxononanoate synthase 2 (771 aa).

Residues 1–418 (MPTGLGYDFL…TVKAAELGEI (418 aa)) are unknown. A substrate-binding site is contributed by R407. The tract at residues 419-771 (VLLGTNSYLG…EDLTPQGAAL (353 aa)) is KAPA synthase. 485–486 (GY) contributes to the pyridoxal 5'-phosphate binding site. Substrate is bound at residue H510. Residues S556 and 581–584 (DESH) each bind pyridoxal 5'-phosphate. N6-(pyridoxal phosphate)lysine is present on K615.

It in the C-terminal section; belongs to the class-II pyridoxal-phosphate-dependent aminotransferase family. BioF subfamily. Requires pyridoxal 5'-phosphate as cofactor.

It catalyses the reaction 6-carboxyhexanoyl-[ACP] + L-alanine + H(+) = (8S)-8-amino-7-oxononanoate + holo-[ACP] + CO2. In terms of biological role, catalyzes the decarboxylative condensation of pimeloyl-[acyl-carrier protein] and L-alanine to produce 8-amino-7-oxononanoate (AON), [acyl-carrier protein], and carbon dioxide. The sequence is that of Putative 8-amino-7-oxononanoate synthase 2 (bioF2) from Mycobacterium tuberculosis (strain CDC 1551 / Oshkosh).